Consider the following 205-residue polypeptide: Retron Vc95 putative HNH endonuclease (205 aa).

In terms of biological role, putative HNH endonuclease component of antiviral defense system retron Vc95, composed of a non-coding RNA (ncRNA), a reverse transcriptase (RT), a probable ATP-binding protein and this protein. Expression of retron Vc95 confers protection against bacteriophages T2, T4 and T6. At multiplicity of infection (MOI) of 0.02 cultures slow growth when infected with T4 but do not collapse, at MOI 2 cultures enter growth stasis. In Vibrio cholerae serotype O1 biovar El Tor, this protein is Retron Vc95 putative HNH endonuclease.